A 243-amino-acid polypeptide reads, in one-letter code: Ubiquinone/menaquinone biosynthesis C-methyltransferase UbiE (243 aa).

S-adenosyl-L-methionine contacts are provided by residues Thr69, Asp90, and 116–117 (DA).

This sequence belongs to the class I-like SAM-binding methyltransferase superfamily. MenG/UbiE family.

It catalyses the reaction a 2-demethylmenaquinol + S-adenosyl-L-methionine = a menaquinol + S-adenosyl-L-homocysteine + H(+). The enzyme catalyses a 2-methoxy-6-(all-trans-polyprenyl)benzene-1,4-diol + S-adenosyl-L-methionine = a 5-methoxy-2-methyl-3-(all-trans-polyprenyl)benzene-1,4-diol + S-adenosyl-L-homocysteine + H(+). It functions in the pathway quinol/quinone metabolism; menaquinone biosynthesis; menaquinol from 1,4-dihydroxy-2-naphthoate: step 2/2. Its pathway is cofactor biosynthesis; ubiquinone biosynthesis. Its function is as follows. Methyltransferase required for the conversion of demethylmenaquinol (DMKH2) to menaquinol (MKH2) and the conversion of 2-polyprenyl-6-methoxy-1,4-benzoquinol (DDMQH2) to 2-polyprenyl-3-methyl-6-methoxy-1,4-benzoquinol (DMQH2). This is Ubiquinone/menaquinone biosynthesis C-methyltransferase UbiE from Cupriavidus pinatubonensis (strain JMP 134 / LMG 1197) (Cupriavidus necator (strain JMP 134)).